The primary structure comprises 197 residues: Carnitine operon protein CaiE (197 aa).

Belongs to the transferase hexapeptide repeat family.

It participates in amine and polyamine metabolism; carnitine metabolism. Overproduction of CaiE stimulates the activity of CaiB and CaiD. The polypeptide is Carnitine operon protein CaiE (Citrobacter koseri (strain ATCC BAA-895 / CDC 4225-83 / SGSC4696)).